A 766-amino-acid polypeptide reads, in one-letter code: Single-minded homolog 1 (766 aa).

The bHLH domain maps to 1–53 (MKEKSKNAARTRREKENSEFYELAKLLPLPSAITSQLDKASIIRLTTSYLKMR). PAS domains follow at residues 77-147 (GREL…QPYH) and 218-288 (PPSA…LVKG). The 44-residue stretch at 292 to 335 (TKYYRFLAKHGGWVWVQSYATIVHNSRSSRPHCIVSVNYVLTDT) folds into the PAC domain. In terms of domain architecture, Single-minded C-terminal spans 336–766 (EYKGLQLSLD…GTSVIITNGS (431 aa)). The segment covering 353 to 365 (AFSYTSSSTPTMT) has biased composition (polar residues). Disordered regions lie at residues 353 to 431 (AFSY…SQHD), 528 to 563 (WDED…EPSK), and 642 to 662 (SPRE…SSPN). The Nuclear localization signal signature appears at 368-387 (RKGAKSRLSSSKSKSRTSPY). Over residues 373–385 (SRLSSSKSKSRTS) the composition is skewed to low complexity. The span at 394–404 (HTERSESDHDS) shows a compositional bias: basic and acidic residues. The span at 649–662 (DNSPTALSRISSPN) shows a compositional bias: polar residues.

As to quaternary structure, efficient DNA binding requires dimerization with another bHLH protein. Heterodimer; forms a heterodimer with ARNT, ARNT2.

The protein localises to the nucleus. Transcriptional factor that may have pleiotropic effects during embryogenesis and in the adult. In Pan troglodytes (Chimpanzee), this protein is Single-minded homolog 1 (SIM1).